The primary structure comprises 179 residues: uncharacterized protein (179 aa).

Positions alanine 26–alanine 39 are enriched in low complexity. Positions alanine 26–methionine 179 are disordered. Residues arginine 150–histidine 165 are compositionally biased toward polar residues. A compositionally biased stretch (basic residues) spans glycine 167–methionine 179.

This is an uncharacterized protein from Equus caballus (Horse).